Consider the following 384-residue polypeptide: Probable L-aspartate decarboxylase (384 aa).

Lys-233 carries the post-translational modification N6-(pyridoxal phosphate)lysine.

The protein belongs to the group II decarboxylase family. MfnA subfamily. The cofactor is pyridoxal 5'-phosphate.

The enzyme catalyses L-aspartate + H(+) = beta-alanine + CO2. It participates in cofactor biosynthesis; coenzyme A biosynthesis. Functionally, catalyzes the decarboxylation of L-aspartate to produce beta-alanine. The polypeptide is Probable L-aspartate decarboxylase (Pyrococcus abyssi (strain GE5 / Orsay)).